The sequence spans 425 residues: Serine--tRNA ligase (425 aa).

Position 228–230 (228–230) interacts with L-serine; the sequence is TAE. Position 259 to 261 (259 to 261) interacts with ATP; it reads RSE. Residue glutamate 282 participates in L-serine binding. ATP is bound at residue 346–349; it reads EIAS. L-serine is bound at residue serine 382.

This sequence belongs to the class-II aminoacyl-tRNA synthetase family. Type-1 seryl-tRNA synthetase subfamily. Homodimer. The tRNA molecule binds across the dimer.

The protein resides in the cytoplasm. It carries out the reaction tRNA(Ser) + L-serine + ATP = L-seryl-tRNA(Ser) + AMP + diphosphate + H(+). The catalysed reaction is tRNA(Sec) + L-serine + ATP = L-seryl-tRNA(Sec) + AMP + diphosphate + H(+). Its pathway is aminoacyl-tRNA biosynthesis; selenocysteinyl-tRNA(Sec) biosynthesis; L-seryl-tRNA(Sec) from L-serine and tRNA(Sec): step 1/1. Its function is as follows. Catalyzes the attachment of serine to tRNA(Ser). Is also able to aminoacylate tRNA(Sec) with serine, to form the misacylated tRNA L-seryl-tRNA(Sec), which will be further converted into selenocysteinyl-tRNA(Sec). This chain is Serine--tRNA ligase, found in Rickettsia massiliae (strain Mtu5).